A 443-amino-acid chain; its full sequence is Protoheme IX farnesyltransferase, mitochondrial (443 aa).

The next 7 helical transmembrane spans lie at 174–194, 235–255, 257–277, 280–300, 309–329, 364–384, and 411–431; these read AAGF…LTSV, LAVS…TLGV, PLTG…YTPL, ISIA…VMGW, AGAF…FNAL, LLVL…FPIM, and LFFC…TCKR.

It belongs to the UbiA prenyltransferase family.

It localises to the mitochondrion membrane. The enzyme catalyses heme b + (2E,6E)-farnesyl diphosphate + H2O = Fe(II)-heme o + diphosphate. Functionally, converts protoheme IX and farnesyl diphosphate to heme O. The chain is Protoheme IX farnesyltransferase, mitochondrial (COX10) from Homo sapiens (Human).